Consider the following 153-residue polypeptide: Histone H2B.3 (153 aa).

Residues 1-28 (MAPKADKKPAAKKPAEEEPATEKAEKAP) show a composition bias toward basic and acidic residues. The segment at 1–60 (MAPKADKKPAAKKPAEEEPATEKAEKAPAGKKPKAEKRLPAGKSAGKEGGEGKKGKKKAK) is disordered. N6-acetyllysine occurs at positions 7 and 37. Residue K149 forms a Glycyl lysine isopeptide (Lys-Gly) (interchain with G-Cter in ubiquitin) linkage.

This sequence belongs to the histone H2B family. The nucleosome is a histone octamer containing two molecules each of H2A, H2B, H3 and H4 assembled in one H3-H4 heterotetramer and two H2A-H2B heterodimers. The octamer wraps approximately 147 bp of DNA. Can be acetylated to form H2BK6ac and H2BK33ac. In terms of processing, monoubiquitinated to form H2BK143ub1; may give a specific tag for epigenetic transcriptional activation.

Its subcellular location is the nucleus. The protein localises to the chromosome. Its function is as follows. Core component of nucleosome. Nucleosomes wrap and compact DNA into chromatin, limiting DNA accessibility to the cellular machineries which require DNA as a template. Histones thereby play a central role in transcription regulation, DNA repair, DNA replication and chromosomal stability. DNA accessibility is regulated via a complex set of post-translational modifications of histones, also called histone code, and nucleosome remodeling. The chain is Histone H2B.3 from Zea mays (Maize).